The following is a 1258-amino-acid chain: Splicing factor, arginine/serine-rich 19 (1258 aa).

Disordered stretches follow at residues 1 to 32 (MEEE…LSPS), 159 to 345 (KTVS…PRRR), 370 to 398 (GGPA…EEEP), 410 to 1034 (PRQP…PPPM), 1114 to 1154 (GSLP…DKYL), and 1223 to 1258 (FRKH…LPPL). A compositionally biased stretch (basic and acidic residues) spans 7–27 (SRGKTEESGEDRGDGPPDRDP). The segment covering 193–207 (SSASSSPSPSPSSSS) has biased composition (low complexity). Pro residues predominate over residues 208 to 223 (PSPPPPPPPPPPPALP). A compositionally biased stretch (basic and acidic residues) spans 228–237 (DIYDPFHPTD). Phosphoserine is present on Ser-241. The segment covering 256–266 (TGSNPSSSAGT) has biased composition (polar residues). Over residues 269-283 (PEEEEEEEEEEEEEG) the composition is skewed to acidic residues. Thr-329 is subject to Phosphothreonine. The segment covering 374–383 (LPLPPLPPTD) has biased composition (pro residues). Residues 384 to 395 (PEIEEGEIVQPE) show a composition bias toward acidic residues. The segment covering 414–426 (PASVATLASVAAP) has biased composition (low complexity). Phosphoserine is present on residues Ser-444 and Ser-449. The segment covering 480 to 491 (KILTQRRERYRQ) has biased composition (basic residues). Phosphoserine occurs at positions 493, 495, 512, and 520. Basic residues-rich tracts occupy residues 540–555 (TARR…RSRS) and 562–579 (RGSH…RRRS). Phosphoserine is present on residues Ser-579 and Ser-581. Over residues 594 to 613 (RERHRGKRREGGKKKKKRSR) the composition is skewed to basic residues. A compositionally biased stretch (basic and acidic residues) spans 614–625 (SRAEKRSGDLEK). Thr-665 is subject to Phosphothreonine. Phosphoserine is present on residues Ser-678 and Ser-684. Phosphotyrosine is present on Tyr-691. A phosphoserine mark is found at Ser-693 and Ser-697. Composition is skewed to basic and acidic residues over residues 698–711 (ADER…DRRR) and 721–743 (SREK…DRSS). Low complexity-rich tracts occupy residues 752 to 777 (SAPG…SCSS) and 795 to 806 (SSTTPAKDSSSS). A Glycyl lysine isopeptide (Lys-Gly) (interchain with G-Cter in SUMO2) cross-link involves residue Lys-814. Residues 815–833 (FSRDRESRSPFLKPDERAP) show a composition bias toward basic and acidic residues. 2 positions are modified to phosphoserine: Ser-821 and Ser-823. Basic residues predominate over residues 845-877 (KPKKTKAKAKAGAKKAKGTKGKTKPSKTRKKVR). Phosphoserine occurs at positions 878, 885, 912, and 914. The span at 924–937 (STPPPKVAPPPPAL) shows a compositional bias: pro residues. 2 positions are modified to phosphothreonine: Thr-925 and Thr-938. A compositionally biased stretch (polar residues) spans 940 to 949 (DSQTVDSSCK). Ser-941 carries the post-translational modification Phosphoserine. Position 950 is a phosphothreonine (Thr-950). Residues 971 to 986 (EEEEEEEEEEEEEEEQ) show a composition bias toward acidic residues. Residues 987 to 1019 (QPATTTATSTAAAAPSTAPSAGSTAGDSGAEDG) show a composition bias toward low complexity. The segment at 1133 to 1258 (PASDKREGSS…GGPGLPLPPL (126 aa)) is necessary for interaction with the CTD domain of POLR2A. Basic and acidic residues predominate over residues 1135–1154 (SDKREGSSSSEGRGDTDKYL). The segment covering 1246–1258 (PDKGGPGLPLPPL) has biased composition (pro residues).

The protein belongs to the splicing factor SR family. Interacts with POLR2A.

Its subcellular location is the nucleus. Functionally, may function in pre-mRNA splicing. This chain is Splicing factor, arginine/serine-rich 19 (Scaf1), found in Rattus norvegicus (Rat).